The chain runs to 296 residues: MLLGSHVSMNGKKMLEGSAEEAHKFGESTFMIYTGAPQNTRRKPIEELNIEKGHEIMKAHGLSNIVVHAPYIINIANTVKPHVFELGVEFLQSEIERTQALGAQDIVLHPGSHVGEGTDAGIKKIIEGLNEVLTNDNNVRIALETMAGKGSEVGRNFEELARIIDGVNHNDRLSVCFDTCHTHDAGYNVKEDFDGVLNEFDKIIGVDRIKVVHVNDSKNDIGAHKDRHENIGFGYIGFDALNYVVHHDTFKDIPKILETPYVGEDKKNKKPPYKLEIEMLKQQKFDEDLKNKILQQ.

Positions 68, 109, 144, 178, 181, 213, 226, 228, and 258 each coordinate Zn(2+).

The protein belongs to the AP endonuclease 2 family. Zn(2+) serves as cofactor.

It carries out the reaction Endonucleolytic cleavage to 5'-phosphooligonucleotide end-products.. Functionally, endonuclease IV plays a role in DNA repair. It cleaves phosphodiester bonds at apurinic or apyrimidinic (AP) sites, generating a 3'-hydroxyl group and a 5'-terminal sugar phosphate. The protein is Probable endonuclease 4 of Staphylococcus saprophyticus subsp. saprophyticus (strain ATCC 15305 / DSM 20229 / NCIMB 8711 / NCTC 7292 / S-41).